Reading from the N-terminus, the 587-residue chain is Large T antigen (587 aa).

Positions 6–82 (RLTELLCLPV…PEESGYATFE (77 aa)) constitute a J domain. Residues 58 to 78 (EGLRADETLEDSDPEPEESGY) form a disordered region. Positions 65-75 (TLEDSDPEPEE) are enriched in acidic residues. Positions 102 to 219 (CMQTYFSVNE…EECSIDMNVV (118 aa)) form a DNA-binding region, T-ag OBD. The T-ag D1-type zinc finger occupies 221–319 (EKQFMHAMLY…KRFRSATMTR (99 aa)). Zn(2+) is bound by residues Cys-258, Cys-261, His-275, and His-279. Residues 360–520 (PDVDVIVDIL…KVYAKALRNN (161 aa)) enclose the SF3 helicase domain. 386-393 (GPVNTGKT) contributes to the ATP binding site.

In terms of assembly, forms homohexamers in the presence of ATP. Interacts with host HDAC1. Interacts (via LXCXE domain) with host RB1; the interaction induces the aberrant dissociation of RB1-E2F1 complex thereby disrupting RB1's activity. Interacts (via LXCXE domain) with host pRB-related proteins RBL1 and RBL2. Interacts (via C-terminus) with host TOP1 and POLA1 allowing DNA replication. Interacts with host TP53, inhibiting TP53 binding to DNA. Interacts with host preinitiation complex components TBP, TFIIA and TFIID to regulate transcription initiation. It depends on Mg(2+) as a cofactor. Post-translationally, phosphorylated on both serine and threonine residues. Small t antigen inhibits the dephosphorylation by the AC form of PP2A. In terms of processing, O-Glycosylated near the C-terminal region. Acetylated by CBP in a TP53-dependent manner.

The protein localises to the host nucleus. It catalyses the reaction Couples ATP hydrolysis with the unwinding of duplex DNA by translocating in the 3'-5' direction.. It carries out the reaction ATP + H2O = ADP + phosphate + H(+). Functionally, isoform large T antigen is a key early protein essential for both driving viral replication and inducing cellular transformation. Plays a role in viral genome replication by driving entry of quiescent cells into the cell cycle and by autoregulating the synthesis of viral early mRNA. Displays highly oncogenic activities by corrupting the host cellular checkpoint mechanisms that guard cell division and the transcription, replication, and repair of DNA. Participates in the modulation of cellular gene expression preceeding viral DNA replication. This step involves binding to host key cell cycle regulators retinoblastoma protein RB1/pRb and TP53. Induces the disassembly of host E2F1 transcription factors from RB1, thus promoting transcriptional activation of E2F1-regulated S-phase genes. Inhibits host TP53 binding to DNA, abrogating the ability of TP53 to stimulate gene expression. Plays the role of a TFIID-associated factor (TAF) in transcription initiation for all three RNA polymerases, by stabilizing the TBP-TFIIA complex on promoters. Initiates viral DNA replication and unwinding via interactions with the viral origin of replication. Binds two adjacent sites in the SV40 origin. The replication fork movement is facilitated by Large T antigen helicase activity. Has processive 3'-5' DNA helicase activity which requires a short 3' single-stranded region and ATP. Activates the transcription of viral late mRNA, through host TBP and TFIIA stabilization. Interferes with histone deacetylation mediated by HDAC1, leading to activation of transcription. The sequence is that of Large T antigen from Budgerigar fledgling disease virus (BFPyV).